We begin with the raw amino-acid sequence, 196 residues long: MSESQSEIEHNNNNSKLTKISQPPTVRIIPPLNFCPVEKQLYRSGQPSIINQSFLQDLNLKTILWLASEEPQEDFLDYCSMNNIAVEFVGLMNEYSYQNVNPWDALSEDTIKKALELICNKENYPLLVCCGMGRHRTGTVIGCLRRLQGWNLASVSEEYRRFTGSRGGRIMVELLIESFDINSVQIDPTKMPGWLT.

Positions 33–192 (NFCPVEKQLY…SVQIDPTKMP (160 aa)) constitute a Tyrosine-protein phosphatase domain. Cysteine 130 functions as the Phosphocysteine intermediate in the catalytic mechanism.

The protein belongs to the protein-tyrosine phosphatase family.

It is found in the cytoplasm. The enzyme catalyses O-phospho-L-tyrosyl-[protein] + H2O = L-tyrosyl-[protein] + phosphate. Functionally, putative tyrosine-protein phosphatase required for protection against superoxide stress. This chain is Putative tyrosine-protein phosphatase OCA1 (OCA1), found in Debaryomyces hansenii (strain ATCC 36239 / CBS 767 / BCRC 21394 / JCM 1990 / NBRC 0083 / IGC 2968) (Yeast).